The sequence spans 457 residues: NAC domain-containing protein 69 (457 aa).

Residues 4 to 153 (DLVGYRFYPT…NYVICQVMYK (150 aa)) form the NAC domain. Residues 107–159 (IGIKKTLVYYEGRVPKGVWTPWVMHEYHITCLPQDQRNYVICQVMYKGEDGDV) mediate DNA binding. Disordered stretches follow at residues 158 to 180 (DVPS…SNTV) and 302 to 332 (DSNS…SNRQ). The segment covering 162-180 (GGNNSSEPSQSLVSDSNTV) has biased composition (polar residues). Positions 302–311 (DSNSDAESIS) are enriched in low complexity. Residues 312–332 (ATSYQGTSSPGDDSVGSSNRQ) show a composition bias toward polar residues. Residues 421-441 (IYLMRMIIGFILLLALISNII) form a helical membrane-spanning segment.

The protein localises to the membrane. The protein resides in the nucleus. Transcription activator activated by proteolytic cleavage through regulated intramembrane proteolysis (RIP). Involved in salt stress response during seed germination and seedling growth. Binds the auxin-responsive IAA30 gene promoter and may serve as a molecular link that interconnects a developmental feedback loop of auxin signaling with a salt signal transduction pathway during seed germination. This is NAC domain-containing protein 69 (NAC69) from Arabidopsis thaliana (Mouse-ear cress).